Here is a 247-residue protein sequence, read N- to C-terminus: V-type proton ATPase subunit D (247 aa).

This sequence belongs to the V-ATPase D subunit family. V-ATPase is a heteromultimeric enzyme made up of two complexes: the ATP-hydrolytic V1 complex and the proton translocation V0 complex. The V1 complex consists of three catalytic AB heterodimers that form a heterohexamer, three peripheral stalks each consisting of EG heterodimers, one central rotor including subunits D and F, and the regulatory subunits C and H. The proton translocation complex V0 consists of the proton transport subunit a, a ring of proteolipid subunits c9c'', rotary subunit d, subunits e and f, and the accessory subunits ATP6AP1/Ac45 and ATP6AP2/PRR. Interacts with SNX10.

The protein resides in the membrane. It localises to the cytoplasmic vesicle. The protein localises to the clathrin-coated vesicle membrane. It is found in the cytoplasm. Its subcellular location is the cytoskeleton. The protein resides in the microtubule organizing center. It localises to the centrosome. The protein localises to the cell projection. It is found in the cilium. Subunit of the V1 complex of vacuolar(H+)-ATPase (V-ATPase), a multisubunit enzyme composed of a peripheral complex (V1) that hydrolyzes ATP and a membrane integral complex (V0) that translocates protons. V-ATPase is responsible for acidifying and maintaining the pH of intracellular compartments and in some cell types, is targeted to the plasma membrane, where it is responsible for acidifying the extracellular environment. May play a role in cilium biogenesis through regulation of the transport and the localization of proteins to the cilium. The protein is V-type proton ATPase subunit D (ATP6V1D) of Homo sapiens (Human).